Consider the following 692-residue polypeptide: ATP-dependent DNA helicase DinG (692 aa).

The 278-residue stretch at 16–293 (NLGNQLDNFI…AELAEYKKAA (278 aa)) folds into the Helicase ATP-binding domain. 56 to 63 (AGTGIGKS) is a binding site for ATP. Cysteine 123 contributes to the [4Fe-4S] cluster binding site. Residues 134–137 (NNDQ) carry the DEAH box motif. Residues cysteine 192 and cysteine 202 each coordinate [4Fe-4S] cluster. The DEAH box signature appears at 247 to 250 (DEAH). One can recognise a Helicase C-terminal domain in the interval 514–692 (LIKTLPEYLE…PPFKRVIEYS (179 aa)).

Belongs to the helicase family. DinG subfamily. Type 1 sub-subfamily. Requires [4Fe-4S] cluster as cofactor.

It carries out the reaction Couples ATP hydrolysis with the unwinding of duplex DNA at the replication fork by translocating in the 5'-3' direction. This creates two antiparallel DNA single strands (ssDNA). The leading ssDNA polymer is the template for DNA polymerase III holoenzyme which synthesizes a continuous strand.. It catalyses the reaction ATP + H2O = ADP + phosphate + H(+). Its function is as follows. DNA-dependent ATPase and 5'-3' DNA helicase. Unwinds D-loops, R-loops, forked DNA and G-quadruplex DNA. This chain is ATP-dependent DNA helicase DinG, found in Photobacterium profundum (strain SS9).